We begin with the raw amino-acid sequence, 90 residues long: Conotoxin Vc22.1 (90 aa).

The N-terminal stretch at 1–18 (MMTRVFLAMFFLLVLTKG) is a signal peptide.

The protein belongs to the E superfamily. In terms of processing, contains 4 disulfide bonds. As to expression, expressed by the venom duct.

Its subcellular location is the secreted. The protein is Conotoxin Vc22.1 of Conus victoriae (Queen Victoria cone).